A 66-amino-acid polypeptide reads, in one-letter code: Large ribosomal subunit protein bL33c (66 aa).

It belongs to the bacterial ribosomal protein bL33 family.

It localises to the plastid. The protein localises to the chloroplast. This is Large ribosomal subunit protein bL33c from Agrostis stolonifera (Creeping bentgrass).